Consider the following 207-residue polypeptide: A-type ATP synthase subunit E (207 aa).

The protein belongs to the V-ATPase E subunit family. Has multiple subunits with at least A(3), B(3), C, D, E, F, H, I and proteolipid K(x).

The protein resides in the cell membrane. Functionally, component of the A-type ATP synthase that produces ATP from ADP in the presence of a proton gradient across the membrane. The polypeptide is A-type ATP synthase subunit E (Hyperthermus butylicus (strain DSM 5456 / JCM 9403 / PLM1-5)).